Here is a 168-residue protein sequence, read N- to C-terminus: Photosystem I assembly protein Ycf3 (168 aa).

3 TPR repeats span residues 35 to 68, 72 to 105, and 120 to 153; these read AFTY…EIDP, SYIL…NPFL, and GEQA…TPGN.

The protein belongs to the Ycf3 family.

The protein resides in the plastid. Its subcellular location is the chloroplast thylakoid membrane. Functionally, essential for the assembly of the photosystem I (PSI) complex. May act as a chaperone-like factor to guide the assembly of the PSI subunits. The protein is Photosystem I assembly protein Ycf3 of Coffea arabica (Arabian coffee).